Here is a 715-residue protein sequence, read N- to C-terminus: Epidermal growth factor receptor kinase substrate 8-like protein 2 (715 aa).

Positions 46-202 (MHETSQYHVQ…RQRQSILPPP (157 aa)) constitute a PID domain. The tract at residues 183-243 (QTLKGHQEKI…GFRRRESQEE (61 aa)) is disordered. The segment covering 199 to 208 (LPPPQGPAPI) has biased composition (pro residues). Basic and acidic residues-rich tracts occupy residues 213-222 (RGGDSPEAKN) and 234-243 (GFRRRESQEE). Residue Ser-240 is modified to Phosphoserine. Thr-303 is subject to Phosphothreonine. Positions 448 to 487 (VSPVSRQSIRNSQKHSPTSEPTPPGDALPPVSSPHTHRGY) are disordered. Ser-449 bears the Phosphoserine mark. Polar residues predominate over residues 451–466 (VSRQSIRNSQKHSPTS). Thr-469 carries the phosphothreonine modification. The SH3 domain occupies 492–551 (AMAKYVKILYDFTARNANELSVLKDEVLEVLEDGRQWWKLRSRSGQAGYVPCNILGEARP). At Ser-570 the chain carries Phosphoserine.

Belongs to the EPS8 family. Interacts with ABI1. Part of a complex that contains SOS1, ABI1 and EPS8L2. Associates with F-actin. In terms of tissue distribution, detected in fibroblasts and placenta.

Its subcellular location is the cytoplasm. The protein localises to the cell projection. It localises to the stereocilium. Functionally, stimulates guanine exchange activity of SOS1. May play a role in membrane ruffling and remodeling of the actin cytoskeleton. In the cochlea, is required for stereocilia maintenance in adult hair cells. This is Epidermal growth factor receptor kinase substrate 8-like protein 2 (EPS8L2) from Homo sapiens (Human).